The sequence spans 323 residues: MAAELSMGQELPTSPLAMEYVNDFDLLKFDVKKEPLGRAERPGRPCTRLQPAGSVSSTPLSTPCSSVPSSPSFSPTEPKTHLEDLYWMASNYQQMNPEALNLTPEDAVEALIGSHPVPQPLQSFDGFRSAHHHHHHHHPHPHHGYPGAGVTHDDLGQHAHPHHHHHHQASPPPSSAASPAQQLPTSHPGPGPHATAAATAAGGNGSVEDRFSDDQLVSMSVRELNRHLRGFTKDEVIRLKQKRRTLKNRGYAQSCRYKRVQQKHHLENEKTQLIQQVEQLKQEVSRLARERDAYKVKCEKLANSGFREAGSTSDSPSSPEFFL.

A Glycyl lysine isopeptide (Lys-Gly) (interchain with G-Cter in SUMO) cross-link involves residue lysine 32. The span at 34–43 (EPLGRAERPG) shows a compositional bias: basic and acidic residues. Disordered regions lie at residues 34–78 (EPLG…PTEP) and 116–210 (PVPQ…VEDR). Residues 54–77 (SVSSTPLSTPCSSVPSSPSFSPTE) show a composition bias toward low complexity. 2 stretches are compositionally biased toward basic residues: residues 129-143 (SAHH…HPHH) and 159-168 (AHPHHHHHHQ). Positions 192–201 (PHATAAATAA) are enriched in low complexity. Residues 238 to 263 (RLKQKRRTLKNRGYAQSCRYKRVQQK) form a basic motif region. A bZIP domain is found at 238–301 (RLKQKRRTLK…DAYKVKCEKL (64 aa)). Positions 266–287 (LENEKTQLIQQVEQLKQEVSRL) are leucine-zipper. Residue lysine 297 forms a Glycyl lysine isopeptide (Lys-Gly) (interchain with G-Cter in SUMO) linkage.

Belongs to the bZIP family. Maf subfamily. As to quaternary structure, homodimer or heterodimer with other bHLH-Zip transcription factors. Forms homodimers and heterodimers with FOS, FOSB and FOSL2, but not with JUN proteins (JUN, JUNB and JUND). Interacts with the intracellular cytoplasmic domain of LRP1 (LRPICD); the interaction results in a moderate reduction of MAFB transcriptional potential. Binds DNA as a homodimer or a heterodimer. Interacts with PAX6; the interaction is direct. Interacts with ETS1 and LRP1. In terms of processing, sumoylated. Sumoylation on Lys-32 and Lys-297 stimulates its transcriptional repression activity and promotes macrophage differentiation from myeloid progenitors. In terms of tissue distribution, expressed in pancreatic alpha-cells (glucagon-positive cells), in podocytes of the kidney and macrophages (at protein level). Most abundant in kidney, gut, lung and brain.

It is found in the nucleus. Functionally, acts as a transcriptional activator or repressor. Plays a pivotal role in regulating lineage-specific hematopoiesis by repressing ETS1-mediated transcription of erythroid-specific genes in myeloid cells. Required for monocytic, macrophage, osteoclast, podocyte and islet beta cell differentiation. Involved in renal tubule survival and F4/80 maturation. Activates the insulin and glucagon promoters. Together with PAX6, transactivates weakly the glucagon gene promoter through the G1 element. SUMO modification controls its transcriptional activity and ability to specify macrophage fate. Binds element G1 on the glucagon promoter. Involved either as an oncogene or as a tumor suppressor, depending on the cell context. Required for the transcriptional activation of HOXB3 in the rhombomere r5 in the hindbrain. The sequence is that of Transcription factor MafB (Mafb) from Mus musculus (Mouse).